The sequence spans 191 residues: Protein G1-like1 (191 aa).

The disordered stretch occupies residues Met-1–Arg-29. The 128-residue stretch at Arg-23–Arg-150 folds into the ALOG domain. Positions Lys-148–Lys-152 match the Nuclear localization signal motif. Residues Lys-152–His-179 adopt a coiled-coil conformation.

It belongs to the plant homeotic and developmental regulators ALOG protein family.

The protein localises to the nucleus. In terms of biological role, probable transcription regulator that acts as a developmental regulator by promoting cell growth in response to light. This is Protein G1-like1 from Oryza sativa subsp. indica (Rice).